Here is a 295-residue protein sequence, read N- to C-terminus: Probable lipid kinase YegS-like (295 aa).

The DAGKc domain maps to 1-129; it reads MQGRKAMLVL…IDLGQAGDQL (129 aa). ATP contacts are provided by residues T39, 65–71, and T92; that span reads GDGTLRD. Mg(2+) is bound by residues M210, D213, and L215. E264 functions as the Proton acceptor in the catalytic mechanism.

This sequence belongs to the diacylglycerol/lipid kinase family. YegS lipid kinase subfamily. Mg(2+) serves as cofactor. It depends on Ca(2+) as a cofactor.

It localises to the cytoplasm. Functionally, probably phosphorylates lipids; the in vivo substrate is unknown. This Pseudomonas putida (strain ATCC 47054 / DSM 6125 / CFBP 8728 / NCIMB 11950 / KT2440) protein is Probable lipid kinase YegS-like.